The following is a 257-amino-acid chain: Phosphate import ATP-binding protein PstB (257 aa).

The ABC transporter domain occupies 5 to 246; it reads LEIKDLTAFY…EVIFTSPKNE (242 aa). Residue 37-44 participates in ATP binding; the sequence is GPSGCGKS.

The protein belongs to the ABC transporter superfamily. Phosphate importer (TC 3.A.1.7) family. In terms of assembly, the complex is composed of two ATP-binding proteins (PstB), two transmembrane proteins (PstC and PstA) and a solute-binding protein (PstS).

Its subcellular location is the cell membrane. It carries out the reaction phosphate(out) + ATP + H2O = ADP + 2 phosphate(in) + H(+). Part of the ABC transporter complex PstSACB involved in phosphate import. Responsible for energy coupling to the transport system. This Tropheryma whipplei (strain Twist) (Whipple's bacillus) protein is Phosphate import ATP-binding protein PstB.